The chain runs to 208 residues: Small ribosomal subunit protein uS4 (208 aa).

One can recognise an S4 RNA-binding domain in the interval 98–161 (TRLDNTVYRL…RKIPVIAEAQ (64 aa)).

This sequence belongs to the universal ribosomal protein uS4 family. In terms of assembly, part of the 30S ribosomal subunit. Contacts protein S5. The interaction surface between S4 and S5 is involved in control of translational fidelity.

Functionally, one of the primary rRNA binding proteins, it binds directly to 16S rRNA where it nucleates assembly of the body of the 30S subunit. In terms of biological role, with S5 and S12 plays an important role in translational accuracy. In Maridesulfovibrio salexigens (strain ATCC 14822 / DSM 2638 / NCIMB 8403 / VKM B-1763) (Desulfovibrio salexigens), this protein is Small ribosomal subunit protein uS4.